The primary structure comprises 344 residues: AP2/ERF and B3 domain-containing transcription factor RAV1 (344 aa).

A compositionally biased stretch (low complexity) spans 1-15 (MESSSVDESTTSTGS). The tract at residues 1–22 (MESSSVDESTTSTGSICETPAI) is disordered. The segment at residues 61-116 (KYKGVVPQPNGRWGAQIYEKHQRVWLGTFNEEDEAARAYDVAVHRFRRRDAVTNFK) is a DNA-binding region (AP2/ERF). The interval 148 to 169 (ELEQSKRRRNGNGNMTRTLLTS) is disordered. The TF-B3 DNA-binding region spans 188 to 292 (FEKAVTPSDV…QLYIGWKSRS (105 aa)).

It belongs to the AP2/ERF transcription factor family. RAV subfamily. As to quaternary structure, monomer. As to expression, expressed in all tissues examined: Roots, rosette leaves, cauline leaves, inflorescence stems, flowers and siliques. Highest expression in roots and rosette leaves. Very low expression in flowers.

The protein localises to the nucleus. In terms of biological role, binds specifically to bipartite recognition sequences composed of two unrelated motifs, 5'-CAACA-3' and 5'-CACCTG-3'. May function as negative regulator of plant growth and development. The polypeptide is AP2/ERF and B3 domain-containing transcription factor RAV1 (RAV1) (Arabidopsis thaliana (Mouse-ear cress)).